The primary structure comprises 123 residues: Large ribosomal subunit protein uL14 (123 aa).

This sequence belongs to the universal ribosomal protein uL14 family. As to quaternary structure, part of the 50S ribosomal subunit. Forms a cluster with proteins L3 and L19. In the 70S ribosome, L14 and L19 interact and together make contacts with the 16S rRNA in bridges B5 and B8.

Functionally, binds to 23S rRNA. Forms part of two intersubunit bridges in the 70S ribosome. The chain is Large ribosomal subunit protein uL14 from Buchnera aphidicola subsp. Cinara cedri (strain Cc).